The primary structure comprises 290 residues: UPF0761 membrane protein YihY (290 aa).

The next 6 membrane-spanning stretches (helical) occupy residues L44–F64, V104–L124, F140–I160, I183–I203, A210–L230, and V244–L264.

The protein belongs to the UPF0761 family.

Its subcellular location is the cell inner membrane. This chain is UPF0761 membrane protein YihY, found in Shigella sonnei (strain Ss046).